The primary structure comprises 223 residues: Agamous-like MADS-box protein AGL11 (223 aa).

Residues 1-61 (MGRGKIEIKR…GRVYEYSNNN (61 aa)) form the MADS-box domain. Residues 87–177 (AQYYQQESAK…RTKIAEVERL (91 aa)) form the K-box domain.

As to expression, expressed in flowers and seeds. Expressed in endotesta cell layer of developing seeds.

It localises to the nucleus. Probable transcription factor involved in seed development. Plays a role in seed morphogenesis by promoting the correct development of endotesta cell layer, which directs the further development of the seed coat, the endosperm, and consequently the embryo. The chain is Agamous-like MADS-box protein AGL11 from Vitis vinifera (Grape).